Here is a 426-residue protein sequence, read N- to C-terminus: Chaperone SurA (426 aa).

The N-terminal stretch at 1 to 19 (MGRVLVTIFVLFWPIGSFA) is a signal peptide. PpiC domains follow at residues 169-270 (DAQY…KLLD) and 280-379 (VTQT…QVLD).

It is found in the periplasm. It carries out the reaction [protein]-peptidylproline (omega=180) = [protein]-peptidylproline (omega=0). Chaperone involved in the correct folding and assembly of outer membrane proteins. Recognizes specific patterns of aromatic residues and the orientation of their side chains, which are found more frequently in integral outer membrane proteins. May act in both early periplasmic and late outer membrane-associated steps of protein maturation. The protein is Chaperone SurA of Nitrosococcus oceani (strain ATCC 19707 / BCRC 17464 / JCM 30415 / NCIMB 11848 / C-107).